We begin with the raw amino-acid sequence, 216 residues long: Large ribosomal subunit protein uL3 (216 aa).

The interval 137 to 158 (GASHGAHKNHRKPGSIGGASTP) is disordered.

Belongs to the universal ribosomal protein uL3 family. Part of the 50S ribosomal subunit. Forms a cluster with proteins L14 and L19.

Its function is as follows. One of the primary rRNA binding proteins, it binds directly near the 3'-end of the 23S rRNA, where it nucleates assembly of the 50S subunit. The chain is Large ribosomal subunit protein uL3 from Arthrobacter sp. (strain FB24).